Consider the following 727-residue polypeptide: Pre-B-cell leukemia transcription factor-interacting protein 1 (727 aa).

The span at 1–10 shows a compositional bias: polar residues; it reads MASCPDSDNS. The disordered stretch occupies residues 1-169; it reads MASCPDSDNS…GREPSSSQPV (169 aa). A phosphoserine mark is found at serine 131, serine 142, serine 143, and serine 144. Threonine 148 is modified (phosphothreonine). At serine 164 the chain carries Phosphoserine. 2 coiled-coil regions span residues 270 to 350 and 377 to 405; these read FLLD…RGVD and DPSLLEQHKQLEAEAKALRQELQRQWQLL. Over residues 446 to 456 the composition is skewed to polar residues; the sequence is QGINTGRSPND. Disordered regions lie at residues 446–565 and 694–727; these read QGIN…NSPD and LKKRSRKKEKHSWNPRVVGPREEHSRHPHHYHQG. Positions 473–563 are enriched in basic and acidic residues; sequence WGGKEKWRGG…QKHSWGKDNS (91 aa). Residues 486–506 carry the Nuclear localization signal motif; that stretch reads QKAEHWKPRKEESGQERQRSW. Residue serine 563 is modified to Phosphoserine. Residues 691–716 carry the Nuclear localization signal motif; it reads DKALKKRSRKKEKHSWNPRVVGPREE. Residues 694–703 are compositionally biased toward basic residues; sequence LKKRSRKKEK.

As to quaternary structure, interacts with ESR1, PBX1, PBX2 and PBX3. Interacts with TEX11.

It localises to the cytoplasm. The protein localises to the cytoskeleton. It is found in the nucleus. Its function is as follows. Regulator of pre-B-cell leukemia transcription factors (BPXs) function. Inhibits the binding of PBX1-HOX complex to DNA and blocks the transcriptional activity of E2A-PBX1. Tethers estrogen receptor-alpha (ESR1) to microtubules and allows them to influence estrogen receptors-alpha signaling. The protein is Pre-B-cell leukemia transcription factor-interacting protein 1 (Pbxip1) of Mus musculus (Mouse).